The chain runs to 368 residues: Transaldolase (368 aa).

K140 functions as the Schiff-base intermediate with substrate in the catalytic mechanism.

This sequence belongs to the transaldolase family. Type 2 subfamily.

The protein localises to the cytoplasm. It catalyses the reaction D-sedoheptulose 7-phosphate + D-glyceraldehyde 3-phosphate = D-erythrose 4-phosphate + beta-D-fructose 6-phosphate. It functions in the pathway carbohydrate degradation; pentose phosphate pathway; D-glyceraldehyde 3-phosphate and beta-D-fructose 6-phosphate from D-ribose 5-phosphate and D-xylulose 5-phosphate (non-oxidative stage): step 2/3. Transaldolase is important for the balance of metabolites in the pentose-phosphate pathway. This Kocuria rhizophila (strain ATCC 9341 / DSM 348 / NBRC 103217 / DC2201) protein is Transaldolase.